Reading from the N-terminus, the 872-residue chain is Dynein regulatory complex subunit 7 (872 aa).

Disordered stretches follow at residues 1–40 (MEVL…REET), 231–281 (ESVK…QEEA), and 385–410 (EEED…KSFD). The stretch at 1–64 (MEVLKEKVEE…SEIEVSVPEK (64 aa)) forms a coiled coil. Basic and acidic residues-rich tracts occupy residues 16–40 (REEA…REET), 231–240 (ESVKEEEKAP), and 248–281 (PPRD…QEEA). A coiled-coil region spans residues 254 to 292 (SRFEQEQEMKRQEAIKAEEENRRKQEEARLLEQENAKTD). Over residues 385–398 (EEEDEGMNDDDDVE) the composition is skewed to acidic residues. Residues 399–409 (NLGKEDEDKSF) are compositionally biased toward basic and acidic residues. Coiled-coil stretches lie at residues 676-706 (LKNE…EEEE) and 780-805 (QRLI…KKQQ).

It belongs to the DRC7 family. Component of the nexin-dynein regulatory complex (N-DRC). Interacts with TCTE1/DRC5. Interacts with DRC3 and GAS8/DRC4.

It is found in the cell projection. The protein resides in the cilium. Its subcellular location is the flagellum. It localises to the cytoplasm. The protein localises to the cytoskeleton. It is found in the cilium axoneme. The protein resides in the flagellum axoneme. Functionally, component of the nexin-dynein regulatory complex (N-DRC) a key regulator of ciliary/flagellar motility which maintains the alignment and integrity of the distal axoneme and regulates microtubule sliding in motile axonemes. Involved in the regulation of flagellar motility. Essential for male fertility, sperm head morphogenesis and sperm flagellum formation. This Bos taurus (Bovine) protein is Dynein regulatory complex subunit 7 (DRC7).